Reading from the N-terminus, the 217-residue chain is 7-cyano-7-deazaguanine synthase (217 aa).

10–20 (FSGGQDSTTCL) serves as a coordination point for ATP. 4 residues coordinate Zn(2+): C185, C194, C197, and C200.

The protein belongs to the QueC family. As to quaternary structure, homodimer. Zn(2+) serves as cofactor.

It carries out the reaction 7-carboxy-7-deazaguanine + NH4(+) + ATP = 7-cyano-7-deazaguanine + ADP + phosphate + H2O + H(+). The protein operates within purine metabolism; 7-cyano-7-deazaguanine biosynthesis. Its function is as follows. Catalyzes the ATP-dependent conversion of 7-carboxy-7-deazaguanine (CDG) to 7-cyano-7-deazaguanine (preQ(0)). The polypeptide is 7-cyano-7-deazaguanine synthase (Streptococcus thermophilus (strain CNRZ 1066)).